A 313-amino-acid polypeptide reads, in one-letter code: tRNA dimethylallyltransferase (313 aa).

17–24 is an ATP binding site; sequence GPTASGKT. 19–24 contributes to the substrate binding site; it reads TASGKT. Interaction with substrate tRNA stretches follow at residues 42 to 45, 166 to 170, 247 to 252, and 280 to 287; these read DSAL, QRLSR, RCVGYR, and KRQITWLR.

The protein belongs to the IPP transferase family. As to quaternary structure, monomer. The cofactor is Mg(2+).

It carries out the reaction adenosine(37) in tRNA + dimethylallyl diphosphate = N(6)-dimethylallyladenosine(37) in tRNA + diphosphate. Its function is as follows. Catalyzes the transfer of a dimethylallyl group onto the adenine at position 37 in tRNAs that read codons beginning with uridine, leading to the formation of N6-(dimethylallyl)adenosine (i(6)A). This Photorhabdus laumondii subsp. laumondii (strain DSM 15139 / CIP 105565 / TT01) (Photorhabdus luminescens subsp. laumondii) protein is tRNA dimethylallyltransferase.